The primary structure comprises 79 residues: Delta-hormotoxin-Cpt1b (79 aa).

The N-terminal stretch at Met-1–Ser-20 is a signal peptide. Residues Arg-21–Glu-31 constitute a propeptide that is removed on maturation. 3 disulfides stabilise this stretch: Cys-36-Cys-75, Cys-38-Cys-66, and Cys-56-Cys-76.

The protein belongs to the sea anemone sodium channel inhibitory toxin family.

The protein localises to the secreted. Its subcellular location is the nematocyst. Its function is as follows. In neuromuscular preparation of crustaceans, the toxin increased neurotransmitter release, causing repetitive firing of the axons. May affect sodium channels (Nav). This chain is Delta-hormotoxin-Cpt1b, found in Calliactis parasitica (Sea anemone).